The sequence spans 476 residues: Cardiolipin synthase (476 aa).

A run of 2 helical transmembrane segments spans residues 2–22 (HLLI…IIFI) and 31–51 (WAWI…YILF). PLD phosphodiesterase domains are found at residues 207 to 234 (INYR…GDEY) and 389 to 416 (EKGF…DIRS). Residues histidine 212, lysine 214, aspartate 219, histidine 394, lysine 396, and aspartate 401 contribute to the active site.

Belongs to the phospholipase D family. Cardiolipin synthase subfamily.

It is found in the cell membrane. The enzyme catalyses 2 a 1,2-diacyl-sn-glycero-3-phospho-(1'-sn-glycerol) = a cardiolipin + glycerol. Functionally, catalyzes the reversible phosphatidyl group transfer from one phosphatidylglycerol molecule to another to form cardiolipin (CL) (diphosphatidylglycerol) and glycerol. In Clostridium perfringens (strain SM101 / Type A), this protein is Cardiolipin synthase (cls).